Reading from the N-terminus, the 748-residue chain is Malate synthase G (748 aa).

Acetyl-CoA is bound by residues valine 141, 148–149 (RF), serine 298, and arginine 335. The active-site Proton acceptor is the arginine 362. Residues arginine 362, glutamate 453, and 478–481 (GFLD) contribute to the glyoxylate site. Glutamate 453 and aspartate 481 together coordinate Mg(2+). Proline 562 serves as a coordination point for acetyl-CoA. Cysteine 639 carries the cysteine sulfenic acid (-SOH) modification. The active-site Proton donor is the aspartate 653.

The protein belongs to the malate synthase family. GlcB subfamily. Monomer. Requires Mg(2+) as cofactor.

The protein localises to the cytoplasm. It catalyses the reaction glyoxylate + acetyl-CoA + H2O = (S)-malate + CoA + H(+). It functions in the pathway carbohydrate metabolism; glyoxylate cycle; (S)-malate from isocitrate: step 2/2. Involved in the glycolate utilization. Catalyzes the condensation and subsequent hydrolysis of acetyl-coenzyme A (acetyl-CoA) and glyoxylate to form malate and CoA. In Corynebacterium efficiens (strain DSM 44549 / YS-314 / AJ 12310 / JCM 11189 / NBRC 100395), this protein is Malate synthase G.